Consider the following 185-residue polypeptide: Celestoxin (185 aa).

A signal peptide spans 1–20; that stretch reads MKFIAAVLLVALLCPKDSTS. The propeptide occupies 21-148; sequence LASRLSGLLG…GLPVALPVSV (128 aa).

Expressed by the mandibular venom gland.

It localises to the secreted. Has a hypotensive activity. The sequence is that of Celestoxin from Caribicus warreni (Haitian giant galliwasp).